Reading from the N-terminus, the 317-residue chain is Glutathione synthetase (317 aa).

Positions 126 to 311 (KFFATQFTQC…IGDKLMDAIA (186 aa)) constitute an ATP-grasp domain. 152–208 (AAEHRDIILKPLDGMGGSSIFRHREGDPNLSVILETLTQHGSQQIMAQRYLPEIKDG) contacts ATP. Residues Glu-282 and Asn-284 each contribute to the Mg(2+) site.

Belongs to the prokaryotic GSH synthase family. It depends on Mg(2+) as a cofactor. The cofactor is Mn(2+).

It catalyses the reaction gamma-L-glutamyl-L-cysteine + glycine + ATP = glutathione + ADP + phosphate + H(+). It participates in sulfur metabolism; glutathione biosynthesis; glutathione from L-cysteine and L-glutamate: step 2/2. This chain is Glutathione synthetase, found in Pseudomonas aeruginosa (strain ATCC 15692 / DSM 22644 / CIP 104116 / JCM 14847 / LMG 12228 / 1C / PRS 101 / PAO1).